Reading from the N-terminus, the 306-residue chain is Protein SULFUR DEFICIENCY-INDUCED 1 (306 aa).

5 TPR repeats span residues 1-22 (MERS…NLMK), 71-104 (DSAL…CSKN), 107-140 (DSLD…IYQG), 167-200 (SRLL…EPDA), and 202-233 (KSCN…RVLG). Residues 72-139 (SALKDMAVVM…LKRKLRQIYQ (68 aa)) are a coiled coil. Residues 238 to 260 (RTRQRAEELLSELESSLPRMRDA) are a coiled coil. Residues 270-304 (LDDDFVLGLEEMTSTSFKSKRLPIFEQISSFRNTL) form a TPR 6 repeat.

Belongs to the MS5 protein family.

It is found in the nucleus. Involved in the utilization of stored sulfate under sulfur-deficient conditions. This Arabidopsis thaliana (Mouse-ear cress) protein is Protein SULFUR DEFICIENCY-INDUCED 1.